The chain runs to 454 residues: MHSTDTIVAQATPPGRGGVGILRVSGPKAAVVAQTILGKVPKPRYADYLPFRNEDNSVLDQGIALFFPNPNSFTGEDVLELQGHGGPIILDLLLKRILQIPGIRIAKPGEFSERAFLNDKLDLAQAEAIADLIDASSEQAARSAINSLQGAFSSHINEMVESLTNLRIYVEAAIDFPDEEIDFLSDGVIEGKLNTVISQLDDVRTQARQGSLLREGMKVVIAGRPNAGKSSLLNALAGREAAIVTDIAGTTRDVLREHIHIDGMPLHIIDTAGLREASDEVERIGIERAWQEIEQADRVLFMVDSTTTEATTPEEIWPEFMARLPSTLPVTVIRNKSDLTGEPAEITSQGDYPMIRLSARDGMGIELLRSHLKEAMGFNSNTEGGFLARRRHLQALNTAAEHLQQGYQQLVYAKSGELLAEELRLAQQALSEITGEFTSDDLLGRIFSSFCIGK.

Residues arginine 23, glutamate 80, and lysine 120 each contribute to the (6S)-5-formyl-5,6,7,8-tetrahydrofolate site. The region spanning 216–377 (GMKVVIAGRP…LRSHLKEAMG (162 aa)) is the TrmE-type G domain. Asparagine 226 is a binding site for K(+). GTP contacts are provided by residues 226–231 (NAGKSS), 245–251 (TDIAGTT), 270–273 (DTAG), and 358–360 (SAR). Residue serine 230 coordinates Mg(2+). 3 residues coordinate K(+): threonine 245, isoleucine 247, and threonine 250. Threonine 251 provides a ligand contact to Mg(2+). Lysine 454 lines the (6S)-5-formyl-5,6,7,8-tetrahydrofolate pocket.

Belongs to the TRAFAC class TrmE-Era-EngA-EngB-Septin-like GTPase superfamily. TrmE GTPase family. As to quaternary structure, homodimer. Heterotetramer of two MnmE and two MnmG subunits. Requires K(+) as cofactor.

Its subcellular location is the cytoplasm. Functionally, exhibits a very high intrinsic GTPase hydrolysis rate. Involved in the addition of a carboxymethylaminomethyl (cmnm) group at the wobble position (U34) of certain tRNAs, forming tRNA-cmnm(5)s(2)U34. The polypeptide is tRNA modification GTPase MnmE (Proteus mirabilis (strain HI4320)).